A 354-amino-acid polypeptide reads, in one-letter code: Methylthioribose-1-phosphate isomerase (354 aa).

Substrate contacts are provided by residues 58 to 60, R101, and Q204; that span reads RGA. The active-site Proton donor is D245. Position 255 to 256 (255 to 256) interacts with substrate; sequence NK.

It belongs to the eIF-2B alpha/beta/delta subunits family. MtnA subfamily.

The catalysed reaction is 5-(methylsulfanyl)-alpha-D-ribose 1-phosphate = 5-(methylsulfanyl)-D-ribulose 1-phosphate. It participates in amino-acid biosynthesis; L-methionine biosynthesis via salvage pathway; L-methionine from S-methyl-5-thio-alpha-D-ribose 1-phosphate: step 1/6. Its function is as follows. Catalyzes the interconversion of methylthioribose-1-phosphate (MTR-1-P) into methylthioribulose-1-phosphate (MTRu-1-P). This chain is Methylthioribose-1-phosphate isomerase, found in Xanthomonas oryzae pv. oryzae (strain MAFF 311018).